The primary structure comprises 1687 residues: Gag-Pol polyprotein (1687 aa).

Glycine 2 is lipidated: N-myristoyl glycine; by host. Disordered regions lie at residues glycine 107 to proline 126, leucine 136 to alanine 195, histidine 420 to glutamine 447, and glycine 466 to proline 485. A PTAP/PSAP motif motif is present at residues glutamine 108 to glycine 111. A compositionally biased stretch (pro residues) spans glutamate 139–proline 153. The PPXY motif signature appears at proline 140–tyrosine 143. Residues leucine 408–lysine 453 adopt a coiled-coil conformation. The CCHC-type zinc-finger motif lies at aspartate 490–arginine 507. One can recognise a Peptidase A2 domain in the interval threonine 544–leucine 614. Residue aspartate 549 is the Protease; shared with dimeric partner of the active site. A Reverse transcriptase domain is found at leucine 721–leucine 912. Residues aspartate 789, aspartate 863, aspartate 864, aspartate 1162, glutamate 1200, aspartate 1221, and aspartate 1291 each coordinate Mg(2+). One can recognise an RNase H type-1 domain in the interval leucine 1153–glutamine 1299. An HHCC-type zinc finger spans residues histidine 1339–cysteine 1377. One can recognise an Integrase catalytic domain in the interval arginine 1394–proline 1552. Positions 1405 and 1464 each coordinate Mg(2+).

As to quaternary structure, homohexamer; further associates as homomultimer. The virus core is composed of a lattice formed from hexagonal rings, each containing six capsid monomers. Interacts (via PPXY motif) with host NEDD4. Interacts (via PSAP motif) with host TSG101. In terms of assembly, the reverse transcriptase is a monomer (Potential). Interacts (via RNase domains) with host release factor ETF1; this interaction is essential for translational readthrough of amber codon between viral gag and pol genes, as well as for viral replication. As to quaternary structure, homodimer. The cofactor is Mg(2+). Post-translationally, specific enzymatic cleavages by the viral protease yield mature proteins. The protease is released by autocatalytic cleavage. The polyprotein is cleaved during and after budding, this process is termed maturation. Phosphorylated on serine residues.

It is found in the virion. It localises to the host cell membrane. Its subcellular location is the host late endosome membrane. The protein resides in the host endosome. The protein localises to the host multivesicular body. It is found in the host cytoplasm. It carries out the reaction DNA(n) + a 2'-deoxyribonucleoside 5'-triphosphate = DNA(n+1) + diphosphate. The catalysed reaction is Endonucleolytic cleavage to 5'-phosphomonoester.. Protease: Most efficiently inhibited by Amprenavir, which is able to block Gag-Pol processing in infected cells. Functionally, plays a role in budding and is processed by the viral protease during virion maturation outside the cell. During budding, it recruits, in a PPXY-dependent or independent manner, Nedd4-like ubiquitin ligases that conjugate ubiquitin molecules to Gag-Pol, or to Gag-Pol binding host factors. Interaction with HECT ubiquitin ligases probably links the viral protein to the host ESCRT pathway and facilitates release. Its function is as follows. Targets Gag and gag-pol polyproteins to the plasma membrane via a multipartite membrane binding signal, that includes its myristoylated N-terminus. Also mediates nuclear localization of the pre-integration complex. In terms of biological role, constituent of the pre-integration complex (PIC) which tethers the latter to mitotic chromosomes. This allows the integration of the viral genome into the host DNA. Forms the spherical core of the virion that encapsulates the genomic RNA-nucleocapsid complex. Functionally, involved in the packaging and encapsidation of two copies of the genome. Binds with high affinity to conserved UCUG elements within the packaging signal, located near the 5'-end of the genome. This binding is dependent on genome dimerization. Acts as a nucleic acid chaperone which is involved in rearrangement of nucleic acid secondary structures during gRNA retrotranscription. Its function is as follows. Protease: The aspartyl protease mediates proteolytic cleavages of Gag and Gag-Pol polyproteins during or shortly after the release of the virion from the plasma membrane. Cleavages take place as an ordered, step-wise cascade to yield mature proteins. This process is called maturation. Displays maximal activity during the budding process just prior to particle release from the cell. In terms of biological role, reverse transcriptase/ribonuclease H: RT is a multifunctional enzyme that converts the viral dimeric RNA genome into dsDNA in the cytoplasm, shortly after virus entry into the cell. This enzyme displays a DNA polymerase activity that can copy either DNA or RNA templates, and a ribonuclease H (RNase H) activity that cleaves the RNA strand of RNA-DNA heteroduplexes in a partially processive 3' to 5' endonucleasic mode. Conversion of viral genomic RNA into dsDNA requires many steps. A tRNA binds to the primer-binding site (PBS) situated at the 5' end of the viral RNA. RT uses the 3' end of the tRNA primer to perform a short round of RNA-dependent minus-strand DNA synthesis. The reading proceeds through the U5 region and ends after the repeated (R) region which is present at both ends of viral RNA. The portion of the RNA-DNA heteroduplex is digested by the RNase H, resulting in a ssDNA product attached to the tRNA primer. This ssDNA/tRNA hybridizes with the identical R region situated at the 3' end of viral RNA. This template exchange, known as minus-strand DNA strong stop transfer, can be either intra- or intermolecular. RT uses the 3' end of this newly synthesized short ssDNA to perform the RNA-dependent minus-strand DNA synthesis of the whole template. RNase H digests the RNA template except for a polypurine tract (PPT) situated at the 5' end of the genome. It is not clear if both polymerase and RNase H activities are simultaneous. RNase H probably can proceed both in a polymerase-dependent (RNA cut into small fragments by the same RT performing DNA synthesis) and a polymerase-independent mode (cleavage of remaining RNA fragments by free RTs). Secondly, RT performs DNA-directed plus-strand DNA synthesis using the PPT that has not been removed by RNase H as primers. PPT and tRNA primers are then removed by RNase H. The 3' and 5' ssDNA PBS regions hybridize to form a circular dsDNA intermediate. Strand displacement synthesis by RT to the PBS and PPT ends produces a blunt ended, linear dsDNA copy of the viral genome that includes long terminal repeats (LTRs) at both ends. Catalyzes viral DNA integration into the host chromosome, by performing a series of DNA cutting and joining reactions. This enzyme activity takes place after virion entry into a cell and reverse transcription of the RNA genome in dsDNA. The first step in the integration process is 3' processing. This step requires a complex comprising the viral genome, matrix protein and integrase. This complex is called the pre-integration complex (PIC). The integrase protein removes 2 nucleotides from each 3' end of the viral DNA, leaving recessed CA OH's at the 3' ends. In the second step that requires cell division, the PIC enters cell nucleus. In the third step, termed strand transfer, the integrase protein joins the previously processed 3' ends to the 5' ends of strands of target cellular DNA at the site of integration. The last step is viral DNA integration into host chromosome. The sequence is that of Gag-Pol polyprotein (pro-pol) from Phascolarctos cinereus (Koala).